A 327-amino-acid chain; its full sequence is Zinc finger C2HC domain-containing protein 1A (327 aa).

Residues 13–42 (ELVPCKICGRSFFPKVLKKHVPICQKTAAK) form a C2HC/C3H-type 1 zinc finger. Positions 17, 20, 32, and 36 each coordinate Zn(2+). 2 disordered regions span residues 40 to 96 (AAKR…KHEE) and 108 to 131 (NQVIKDGGPLPPPPPPSYDPDYIQ). Residues 46 to 56 (VFDSGRQRAEG) are compositionally biased toward basic and acidic residues. Residues 63-76 (KPIKPKLQSSSSSS) are compositionally biased toward low complexity. Residues 116 to 125 (PLPPPPPPSY) are compositionally biased toward pro residues. The C2HC/C3H-type 2 zinc-finger motif lies at 128-157 (DYIQCPYCQRRFGENAADRHIKFCKEQASR). 4 residues coordinate Zn(2+): Cys-132, Cys-135, His-147, and Cys-151. A disordered region spans residues 154–271 (QASRISNKSK…NPSTGIGMNK (118 aa)). Residues 187–199 (NSPTASSVSSRLP) are compositionally biased toward polar residues. Over residues 211–229 (GIPSSKPSSTGSIKSTPSG) the composition is skewed to low complexity. Composition is skewed to polar residues over residues 233 to 245 (LRNNSSSLTSPPS) and 255 to 267 (VSQSSLRNPSTGI).

Belongs to the ZC2HC1 family. The cofactor is Zn(2+).

This Danio rerio (Zebrafish) protein is Zinc finger C2HC domain-containing protein 1A (zc2hc1a).